The following is a 414-amino-acid chain: Transmembrane protein 184A (414 aa).

Residues 1 to 32 (MTDTPGLLGTPLAWTPPARPAGPQMERAGNGS) are disordered. 7 consecutive transmembrane segments (helical) span residues 48-68 (VSGVFVWAALVLTGHQIYLHL), 83-103 (LLFIVPVYAFDSWLSLLLLGG), 120-140 (FVIYSFLSLCFQYLGGESAIM), 177-197 (LQFCIVKPIMALVTIVLQAFG), 211-231 (LYITLVYNASVSLALYALFLF), 248-268 (FLTIKAVIFLSFWQGLLLAIL), and 290-310 (VAAGYQNFIICIEMLFASIAL). 2 disordered regions span residues 323–342 (TESSPAPSAPMQSISSGLKE) and 364–414 (YTQQ…AEEL). Residues 379-388 (SVPSPRTPTH) are compositionally biased toward polar residues.

This sequence belongs to the TMEM184 family. In terms of tissue distribution, expressed in vascular cells (at protein level).

It localises to the cell membrane. Its subcellular location is the cytoplasm. The protein localises to the perinuclear region. The protein resides in the cytoplasmic vesicle membrane. It is found in the early endosome membrane. It localises to the endosome. Its subcellular location is the cytoplasmic vesicle. The protein localises to the secretory vesicle membrane. In terms of biological role, acts as a heparin receptor in vascular cells. May be involved in vesicle transport in exocrine cells and Sertoli cells. The chain is Transmembrane protein 184A (TMEM184A) from Bos taurus (Bovine).